The sequence spans 576 residues: Urease subunit alpha (576 aa).

In terms of domain architecture, Urease spans 132-576 (GGVDTHIHFI…LPMAQRYFLF (445 aa)). The Ni(2+) site is built by histidine 137, histidine 139, and lysine 220. An N6-carboxylysine modification is found at lysine 220. Substrate is bound at residue histidine 222. Ni(2+)-binding residues include histidine 249 and histidine 275. Histidine 323 functions as the Proton donor in the catalytic mechanism. Aspartate 363 is a Ni(2+) binding site.

It belongs to the metallo-dependent hydrolases superfamily. Urease alpha subunit family. In terms of assembly, heterotrimer of UreA (gamma), UreB (beta) and UreC (alpha) subunits. Three heterotrimers associate to form the active enzyme. Requires Ni cation as cofactor. Post-translationally, carboxylation allows a single lysine to coordinate two nickel ions.

Its subcellular location is the cytoplasm. It carries out the reaction urea + 2 H2O + H(+) = hydrogencarbonate + 2 NH4(+). The protein operates within nitrogen metabolism; urea degradation; CO(2) and NH(3) from urea (urease route): step 1/1. The sequence is that of Urease subunit alpha from Arthrobacter sp. (strain FB24).